Here is a 149-residue protein sequence, read N- to C-terminus: Transcriptional repressor NrdR (149 aa).

A zinc finger lies at 3 to 34; the sequence is CPFCSAVDTKVIDSRLVGDGSQVRRRRQCLVC. In terms of domain architecture, ATP-cone spans 49–139; the sequence is PRVVKSNGVR…VYRSFEDVRE (91 aa).

This sequence belongs to the NrdR family. It depends on Zn(2+) as a cofactor.

Functionally, negatively regulates transcription of bacterial ribonucleotide reductase nrd genes and operons by binding to NrdR-boxes. In Edwardsiella ictaluri (strain 93-146), this protein is Transcriptional repressor NrdR.